Here is a 178-residue protein sequence, read N- to C-terminus: GTP-dependent dephospho-CoA kinase (178 aa).

GTP is bound by residues Asp-48, Ile-49, Asp-67, Lys-69, and Glu-126.

The protein belongs to the GTP-dependent DPCK family.

It catalyses the reaction 3'-dephospho-CoA + GTP = GDP + CoA + H(+). Its pathway is cofactor biosynthesis; coenzyme A biosynthesis. Catalyzes the GTP-dependent phosphorylation of the 3'-hydroxyl group of dephosphocoenzyme A to form coenzyme A (CoA). This is GTP-dependent dephospho-CoA kinase from Methanothrix thermoacetophila (strain DSM 6194 / JCM 14653 / NBRC 101360 / PT) (Methanosaeta thermophila).